The following is a 1222-amino-acid chain: ATP-dependent helicase/nuclease subunit A (1222 aa).

The 457-residue stretch at 39-495 (QKRTAQQIEA…ILLKENFRSQ (457 aa)) folds into the UvrD-like helicase ATP-binding domain. Residue 60–67 (ASAGSGKT) coordinates ATP. Residues 524-810 (QLIAGSHAQT…NLMTIHKSKG (287 aa)) form the UvrD-like helicase C-terminal domain.

Belongs to the helicase family. AddA subfamily. As to quaternary structure, heterodimer of AddA and AddB/RexB. Requires Mg(2+) as cofactor.

The catalysed reaction is Couples ATP hydrolysis with the unwinding of duplex DNA by translocating in the 3'-5' direction.. It carries out the reaction ATP + H2O = ADP + phosphate + H(+). Functionally, the heterodimer acts as both an ATP-dependent DNA helicase and an ATP-dependent, dual-direction single-stranded exonuclease. Recognizes the chi site generating a DNA molecule suitable for the initiation of homologous recombination. The AddA nuclease domain is required for chi fragment generation; this subunit has the helicase and 3' -&gt; 5' nuclease activities. This chain is ATP-dependent helicase/nuclease subunit A, found in Streptococcus pyogenes serotype M28 (strain MGAS6180).